The following is a 199-amino-acid chain: Putative DNA-directed RNA polymerase subunit L376 (199 aa).

It belongs to the eukaryotic RPB7/RPC8 RNA polymerase subunit family.

It localises to the virion. The enzyme catalyses RNA(n) + a ribonucleoside 5'-triphosphate = RNA(n+1) + diphosphate. This Acanthamoeba polyphaga (Amoeba) protein is Putative DNA-directed RNA polymerase subunit L376.